Reading from the N-terminus, the 197-residue chain is Holliday junction branch migration complex subunit RuvA (197 aa).

Positions 1–62 (MIEFVRGEVA…EDQEVLFGFR (62 aa)) are domain I. A domain II region spans residues 63–141 (SRRERALFTK…ELAPDYIPSE (79 aa)). The flexible linker stretch occupies residues 141 to 145 (EGLFA). Residues 146-197 (QGNAELNEACEALTALGYSEREVEKVKKALQGEVLSTDQYVKRALQLLLNVR) are domain III.

It belongs to the RuvA family. Homotetramer. Forms an RuvA(8)-RuvB(12)-Holliday junction (HJ) complex. HJ DNA is sandwiched between 2 RuvA tetramers; dsDNA enters through RuvA and exits via RuvB. An RuvB hexamer assembles on each DNA strand where it exits the tetramer. Each RuvB hexamer is contacted by two RuvA subunits (via domain III) on 2 adjacent RuvB subunits; this complex drives branch migration. In the full resolvosome a probable DNA-RuvA(4)-RuvB(12)-RuvC(2) complex forms which resolves the HJ.

The protein resides in the cytoplasm. Functionally, the RuvA-RuvB-RuvC complex processes Holliday junction (HJ) DNA during genetic recombination and DNA repair, while the RuvA-RuvB complex plays an important role in the rescue of blocked DNA replication forks via replication fork reversal (RFR). RuvA specifically binds to HJ cruciform DNA, conferring on it an open structure. The RuvB hexamer acts as an ATP-dependent pump, pulling dsDNA into and through the RuvAB complex. HJ branch migration allows RuvC to scan DNA until it finds its consensus sequence, where it cleaves and resolves the cruciform DNA. In Exiguobacterium sibiricum (strain DSM 17290 / CCUG 55495 / CIP 109462 / JCM 13490 / 255-15), this protein is Holliday junction branch migration complex subunit RuvA.